We begin with the raw amino-acid sequence, 498 residues long: DEAD-box ATP-dependent RNA helicase 6 (498 aa).

The interval 1 to 109 is disordered; the sequence is MDPRARYPPG…WKAQLKLPPQ (109 aa). Residues 33-49 show a composition bias toward basic residues; the sequence is QHQHQHQQPPHPHHHQY. Low complexity-rich tracts occupy residues 50–61 and 75–86; these read VQRQPQPQQTPH and AAEAAGASEQKA. A Q motif motif is present at residues 124–152; sequence NEFEDYFLKRELLMGIYEKGFERPSPIQE. The region spanning 155-325 is the Helicase ATP-binding domain; sequence IPIALTGSDI…DKYLPKPYVI (171 aa). 168 to 175 serves as a coordination point for ATP; sequence AKNGTGKT. Residues 273–276 carry the DEAD box motif; the sequence is DEAD. Residues 335–495 form the Helicase C-terminal domain; that stretch reads GITQFYAFVE…PIPPQIDRAI (161 aa).

Belongs to the DEAD box helicase family. DDX6/DHH1 subfamily.

The protein resides in the cytoplasm. It is found in the P-body. It carries out the reaction ATP + H2O = ADP + phosphate + H(+). ATP-dependent RNA helicase involved in mRNA turnover, and more specifically in mRNA decapping. The chain is DEAD-box ATP-dependent RNA helicase 6 from Oryza sativa subsp. japonica (Rice).